The sequence spans 556 residues: Formate--tetrahydrofolate ligase 1 (556 aa).

Position 65–72 (65–72 (TPAGEGKT)) interacts with ATP.

Belongs to the formate--tetrahydrofolate ligase family.

It carries out the reaction (6S)-5,6,7,8-tetrahydrofolate + formate + ATP = (6R)-10-formyltetrahydrofolate + ADP + phosphate. It functions in the pathway one-carbon metabolism; tetrahydrofolate interconversion. This Desulfitobacterium hafniense (strain Y51) protein is Formate--tetrahydrofolate ligase 1.